Reading from the N-terminus, the 197-residue chain is Small ribosomal subunit protein uS5 (197 aa).

Residues 1-27 (MAEREQRGGRDQRGGGRERKEREERDS) are disordered. The 64-residue stretch at 29–92 (FVDKLVHINR…ESAKRNLTRV (64 aa)) folds into the S5 DRBM domain.

Belongs to the universal ribosomal protein uS5 family. Part of the 30S ribosomal subunit. Contacts proteins S4 and S8.

With S4 and S12 plays an important role in translational accuracy. Its function is as follows. Located at the back of the 30S subunit body where it stabilizes the conformation of the head with respect to the body. This is Small ribosomal subunit protein uS5 from Bradyrhizobium diazoefficiens (strain JCM 10833 / BCRC 13528 / IAM 13628 / NBRC 14792 / USDA 110).